The sequence spans 1356 residues: MAEVKVEVASIDWQKRCLSLETQLFRFRLQASKIRELLADKMQELEQRLLEAEQRAENAETQVGVMEEKIKLSNLKSVDSTGTLHQKYQELLRAVQGKDELISQLQAQLEKQKQTRAEEAKIVQEKAAKIKEWVTVKLAELEMENQQLKTCNQQLVEQVAALQDALEDLRMTPSEELLVVPEGTPERDPVPSGPSDQPVEQDSNPHTQILKVAVPTPSLGTLQSRDSLSEARSLEDLRFSMVHPGETAEAKTLQSHLQKEGSPSQLCMKPGNPKHGSASYRESLVTAQGGTFPGTKTSAREGGPGSSLTLPKVRAPSIPRDSFQVAKRHHSQPQVGPGHCDHVVSIEIGALSALHSPGSSKSEARAKVREEAEKMEMEALPPSGKQEERESLKSRRGELEDVELENKPPTPPLHRFPSWESRIYAMATSGMQLSEVSSRRSNAACYASGPSALAFPGAFSGLVYKNVTVPVYTALKGKATQISNVPFVDESSGSDDDCGSQASFRMSVPCSEYRKTSGLGSPRAIKRGVSMSSLSSEGDYAIPPDACSLDSDYSEPEHKLQRTSSYSTDGEALEKSGYLLKMGSRVKTWKRRWFVLRQGQILYYKSPSDVIRKPQGQVDLNSHCQIVREEEAQTFQLISGNKTYYLTAESPSLLEEWIRVLQSLLKVQVTGPPALHQGGTKPTVKGWLTKVKHGHSKLVWCALVGKTFYYYRSHEDKRPLGCLPVQDAHIEEVDRSCDSDEDYEAGGTGRLLSSHCTLVIHPPEHSPTYLLIGTKHEKDTWLYHLTVAAGGSNAKVGTVYEQLIGKLMDGEGNPDSPLWRHPMLCYSQEGLCASLTTLPSEALQTEALKLFKSCQLFINVPVEAASVDYHVSLAQTALQVCLVHPELQSEIYCQLMKQISCRPPQKYSLMQCWQLLALCAPLFLPQHHFLWYVKQQLQRHADPRSETGQYAIYCQRAVERTLQTGEREARPSRMEVVSILLRNPFHHSLPFSIPVHFANGTYQVVGFDGSSTVDEFLQRLNQETGMRKPSQSGFALFTDDPSGRDLEHCLQGRVKICDAISKWEQTLKELHPGKSEGGTRVVKLMYKNRLYFRSQVKGETERERLLLAFQASGEIVAGRFPVTKELALEMAALMAQVEYGDLEKPTLPGPGGTPPTKAQHLLQQVLDRFYPRRYRNGAPPEQLRHLADMMATKWAALQGCSPPECIRIYLTVARKWPLFGAKLFAAQPAQLSPKENTVVWIAVNEDGVSILDHRTMQVNITYPYSSVTTFGGCRDDFMLVIRSIPDQSSGKTRIDKLTFRMPAPKITETTLMMASYMNHCSATVNLSAKLPAARQPRDLDGQFFASVSCTKGSALL.

Residues 27-172 (FRLQASKIRE…QDALEDLRMT (146 aa)) are a coiled coil. Disordered regions lie at residues 179–203 (VVPE…EQDS), 256–314 (HLQK…PKVR), and 354–414 (LHSP…PPLH). 3 stretches are compositionally biased toward polar residues: residues 194-203 (PSDQPVEQDS), 256-265 (HLQKEGSPSQ), and 285-297 (VTAQ…GTKT). A coiled-coil region spans residues 359–407 (SSKSEARAKVREEAEKMEMEALPPSGKQEERESLKSRRGELEDVELENK). Composition is skewed to basic and acidic residues over residues 362-377 (SEAR…KMEM) and 385-399 (KQEE…RGEL). S451 is subject to Phosphoserine. PH domains follow at residues 572-666 (ALEK…SLLK) and 681-790 (KPTV…VAAG). At S739 the chain carries Phosphoserine. The MyTH4 domain occupies 826–980 (YSQEGLCASL…PSRMEVVSIL (155 aa)). Positions 991-1327 (FSIPVHFANG…NHCSATVNLS (337 aa)) constitute an FERM domain.

This chain is Pleckstrin homology domain-containing family H member 1 (Plekhh1), found in Mus musculus (Mouse).